We begin with the raw amino-acid sequence, 570 residues long: MPARISRATYAQMFGPTVGDKVRLADTDLIIEVERDLTTYGEEVKFGGGKVIRDGMGQSQLSRAEGAMDTVITNALILDHSGIYKADIGLLDGRIALIGKAGNPDTQPGISIIIGPGTEIIAGEGKIVTAGGIDTHVHFISPQQVDEALNAGITCMVGGGTGPAHGTLATTCTPGPWHIARLIQSFDGLPMNIGVFGKGNASLPGALEEMVRAGACGLKLHEDWGCTPAAIDNCLSVADHFDVQVAIHTDTLNEGGFVEDTLNAFKGRTIHSFHTEGAGGGHAPDIIRVCQYPNVLPASTNPTRPYTVNTIAEHLDMLMVCHHLSPAIPEDIAFAESRIRKETIAAEDILHDMGAFSIISSDSQAMGRVGEMIIRCWQTADKMKKQRGSLPDDRPGNDNYRARRYIAKYTINPAIAHGMAHEIGSVEVGKRADLVLWNPAFFGVKPDMVLLGGWIATAPMGDANGSIPTPQPMHTRPMFGSFGKARTNTSITFVSQAAMDEGLREKIGVDKQLVAVVNTRGGIGKHSMILNNAMPQMEVDPETYEVRADGELLTCEPVDVVPMAQRYFLF.

Positions 131–570 (GGIDTHVHFI…VPMAQRYFLF (440 aa)) constitute a Urease domain. Ni(2+)-binding residues include H136, H138, and K219. K219 is modified (N6-carboxylysine). A substrate-binding site is contributed by H221. Ni(2+) contacts are provided by H248 and H274. H322 (proton donor) is an active-site residue. A Ni(2+)-binding site is contributed by D362.

The protein belongs to the metallo-dependent hydrolases superfamily. Urease alpha subunit family. As to quaternary structure, heterotrimer of UreA (gamma), UreB (beta) and UreC (alpha) subunits. Three heterotrimers associate to form the active enzyme. It depends on Ni cation as a cofactor. In terms of processing, carboxylation allows a single lysine to coordinate two nickel ions.

It is found in the cytoplasm. The enzyme catalyses urea + 2 H2O + H(+) = hydrogencarbonate + 2 NH4(+). It participates in nitrogen metabolism; urea degradation; CO(2) and NH(3) from urea (urease route): step 1/1. Disrupting the ure1 operon causes loss of urease activity, decreased resistance to low pH killing in vitro and decreased pathogen survival when inoculated in BALB/c mice by gavage. This Brucella suis biovar 1 (strain 1330) protein is Urease subunit alpha 1.